Consider the following 220-residue polypeptide: Regulatory protein VanRB (220 aa).

Positions 4–117 (RILLVEDDDH…ILLKRVEALL (114 aa)) constitute a Response regulatory domain. D53 is subject to 4-aspartylphosphate. A DNA-binding region (ompR/PhoB-type) is located at residues 124 to 218 (AKEFRVGRLT…IRGVGYRLEE (95 aa)).

Post-translationally, may be phosphorylated by VanSB. May also be dephosphorylated by VanSB.

Its subcellular location is the cytoplasm. Its function is as follows. Member of the two-component regulatory system VanSB/VanRB. Activates the transcription of vanSB, vanYB and vanW in response to vancomycin which results in vancomycin resistance. This chain is Regulatory protein VanRB (vanRB), found in Enterococcus faecalis (strain ATCC 700802 / V583).